We begin with the raw amino-acid sequence, 970 residues long: Insulin-degrading enzyme-like 1, peroxisomal (970 aa).

H69 serves as a coordination point for Zn(2+). The active-site Proton acceptor is E72. Residue H73 participates in Zn(2+) binding. E143 is a catalytic residue. Zn(2+) is bound at residue E150.

This sequence belongs to the peptidase M16 family. It depends on Zn(2+) as a cofactor.

The protein resides in the peroxisome. Peptidase that might be involved in pathogen or wound response. Not required for peroxisome biogenesis, indole-3-butyric acid (IBA) metabolism, fatty acid beta-oxidation or degradation of glyoxylate cycle enzymes during seedling development. The chain is Insulin-degrading enzyme-like 1, peroxisomal (PXM16) from Arabidopsis thaliana (Mouse-ear cress).